The following is a 235-amino-acid chain: Glycerol-3-phosphate acyltransferase (235 aa).

The next 6 membrane-spanning stretches (helical) occupy residues 4-24 (LLAI…IMAG), 56-76 (SVTL…VAFF), 94-114 (LLAG…GFKG), 125-145 (LIGI…LTVW), 152-172 (VASI…KYVF), and 191-211 (FHDS…LAIL).

This sequence belongs to the PlsY family. In terms of assembly, probably interacts with PlsX.

The protein resides in the cell inner membrane. It carries out the reaction an acyl phosphate + sn-glycerol 3-phosphate = a 1-acyl-sn-glycero-3-phosphate + phosphate. It functions in the pathway lipid metabolism; phospholipid metabolism. Its function is as follows. Catalyzes the transfer of an acyl group from acyl-phosphate (acyl-PO(4)) to glycerol-3-phosphate (G3P) to form lysophosphatidic acid (LPA). This enzyme utilizes acyl-phosphate as fatty acyl donor, but not acyl-CoA or acyl-ACP. The sequence is that of Glycerol-3-phosphate acyltransferase from Chlorobium luteolum (strain DSM 273 / BCRC 81028 / 2530) (Pelodictyon luteolum).